The following is a 96-amino-acid chain: Exopolysaccharide production repressor protein (96 aa).

2 consecutive transmembrane segments (helical) span residues 6–26 and 35–55; these read FVVSMLGALAAFAIATYFLTG and TLLCAVLIQVGYFLAVLFLVW. The interval 64–96 is disordered; sequence LSPGQLPADPTNDEKQTGKLSLRRLNRPPHFNS.

Its subcellular location is the cell membrane. Its pathway is glycan metabolism; exopolysaccharide biosynthesis. Functionally, inhibition of exopolysaccharide synthesis (EPS) and nodulation ability (NOD). The protein is Exopolysaccharide production repressor protein (exoX) of Sinorhizobium fredii (strain NBRC 101917 / NGR234).